Reading from the N-terminus, the 34-residue chain is IPKNLTRAQWFTIQHIQPSPLQXNKAMNGVNXYT.

N4 carries N-linked (GlcNAc...) asparagine; partial glycosylation. The active-site Proton acceptor is the H15.

It belongs to the pancreatic ribonuclease family.

It localises to the lysosome. The catalysed reaction is an [RNA] containing cytidine + H2O = an [RNA]-3'-cytidine-3'-phosphate + a 5'-hydroxy-ribonucleotide-3'-[RNA].. It carries out the reaction an [RNA] containing uridine + H2O = an [RNA]-3'-uridine-3'-phosphate + a 5'-hydroxy-ribonucleotide-3'-[RNA].. This is Ribonuclease PL1 from Sus scrofa (Pig).